A 171-amino-acid chain; its full sequence is MNYFNVAKIVNTRGLRGELKVISYTDFPEERFKSGAELQIFKTEKDEVPVQTVTVKNAKEYKGSFIVTLEGMNSINDVEKFKGMILKVEEDQLQDLEEGEFYLHQIIGLDVIENDQKIGTIKEVLSYGPNDVWVVKRPNQNDLLLPYLKDVILNVDLEQGAVQVSVPEGLD.

Residues 98–170 (EGEFYLHQII…AVQVSVPEGL (73 aa)) enclose the PRC barrel domain.

Belongs to the RimM family. As to quaternary structure, binds ribosomal protein uS19.

Its subcellular location is the cytoplasm. An accessory protein needed during the final step in the assembly of 30S ribosomal subunit, possibly for assembly of the head region. Essential for efficient processing of 16S rRNA. May be needed both before and after RbfA during the maturation of 16S rRNA. It has affinity for free ribosomal 30S subunits but not for 70S ribosomes. The polypeptide is Ribosome maturation factor RimM (Pediococcus pentosaceus (strain ATCC 25745 / CCUG 21536 / LMG 10740 / 183-1w)).